The following is a 458-amino-acid chain: Peptidyl-prolyl cis-trans isomerase FKBP4 (458 aa).

Met1 bears the N-acetylmethionine; in peptidyl-prolyl cis-trans isomerase FKBP4; alternate mark. The residue at position 2 (Thr2) is an N-acetylthreonine; in peptidyl-prolyl cis-trans isomerase FKBP4, N-terminally processed; partial. The PPIase FKBP-type 1 domain occupies 50–138; sequence GDRVFVHYTG…VFEVELFEFK (89 aa). A Phosphothreonine; by CK2 modification is found at Thr143. The PPIase FKBP-type 2 domain maps to 167–253; it reads GAMVEVALEG…RYEVHLKSFE (87 aa). At Tyr220 the chain carries Phosphotyrosine. Positions 267-400 are interaction with tubulin; the sequence is LEQSNIVKER…TQLAVCQQRT (134 aa). TPR repeat units lie at residues 270–303, 319–352, and 353–386; these read SNIV…LEYE, LASH…DSNN, and EKGL…YPSN. An N6-acetyllysine modification is found at Lys282. Arg373 is modified (omega-N-methylarginine). The disordered stretch occupies residues 423–458; sequence HKAKTEVAAGDHPTDAEMKGEPNNVAGNQAQVKTEA. At Thr436 the chain carries Phosphothreonine. Lys441 participates in a covalent cross-link: Glycyl lysine isopeptide (Lys-Gly) (interchain with G-Cter in SUMO1). A compositionally biased stretch (polar residues) spans 447 to 458; that stretch reads VAGNQAQVKTEA.

In terms of assembly, homodimer. Interacts with GLMN. Associates with HSP90AA1 and HSP70 in steroid hormone receptor complexes. Also interacts with peroxisomal phytanoyl-CoA alpha-hydroxylase (PHYH). Interacts with NR3C1 and dynein. Interacts with HSF1 in the HSP90 complex. Associates with tubulin. Interacts with MAPT/TAU. Interacts (via TPR domain) with S100A1, S100A2 and S100A6; the interaction is Ca(2+) dependent. Interaction with S100A1 and S100A2 (but not with S100A6) leads to inhibition of FKBP4-HSP90 interaction. Interacts with dynein; causes partially NR3C1 transport to the nucleus. Phosphorylation by CK2 results in loss of HSP90 binding activity. In terms of tissue distribution, widely detected in the brain (at protein level).

The protein resides in the cytoplasm. It is found in the cytosol. It localises to the mitochondrion. Its subcellular location is the nucleus. The protein localises to the cytoskeleton. The protein resides in the cell projection. It is found in the axon. It catalyses the reaction [protein]-peptidylproline (omega=180) = [protein]-peptidylproline (omega=0). Inhibited by FK506. Its function is as follows. Immunophilin protein with PPIase and co-chaperone activities. Component of unligated steroid receptors heterocomplexes through interaction with heat-shock protein 90 (HSP90). Plays a role in the intracellular trafficking of heterooligomeric forms of steroid hormone receptors between cytoplasm and nuclear compartments. May have a protective role against oxidative stress in mitochondria. Also acts as a regulator of microtubule dynamics by inhibiting MAPT/TAU ability to promote microtubule assembly. The PPIase activity controls neuronal growth cones via regulation of TRPC1 channel opening. The sequence is that of Peptidyl-prolyl cis-trans isomerase FKBP4 (Fkbp4) from Rattus norvegicus (Rat).